The primary structure comprises 152 residues: Ribosome maturation factor RimP (152 aa).

It belongs to the RimP family.

The protein resides in the cytoplasm. Its function is as follows. Required for maturation of 30S ribosomal subunits. The polypeptide is Ribosome maturation factor RimP (Alteromonas mediterranea (strain DSM 17117 / CIP 110805 / LMG 28347 / Deep ecotype)).